The sequence spans 487 residues: Ribulose bisphosphate carboxylase large chain (487 aa).

The substrate site is built by Asn-127 and Thr-177. Lys-179 serves as the catalytic Proton acceptor. Lys-181 contacts substrate. The Mg(2+) site is built by Lys-205, Asp-207, and Glu-208. N6-carboxylysine is present on Lys-205. The active-site Proton acceptor is His-297. Substrate is bound by residues Arg-298, His-330, and Ser-382.

Belongs to the RuBisCO large chain family. Type I subfamily. Heterohexadecamer of 8 large chains and 8 small chains. The cofactor is Mg(2+).

It catalyses the reaction 2 (2R)-3-phosphoglycerate + 2 H(+) = D-ribulose 1,5-bisphosphate + CO2 + H2O. It carries out the reaction D-ribulose 1,5-bisphosphate + O2 = 2-phosphoglycolate + (2R)-3-phosphoglycerate + 2 H(+). RuBisCO catalyzes two reactions: the carboxylation of D-ribulose 1,5-bisphosphate, the primary event in carbon dioxide fixation, as well as the oxidative fragmentation of the pentose substrate. Both reactions occur simultaneously and in competition at the same active site. The chain is Ribulose bisphosphate carboxylase large chain from Paracoccus denitrificans (strain Pd 1222).